Reading from the N-terminus, the 196-residue chain is MIPVVIEQTSRGERSYDIYSRLLKDRIIMLTGPVEDNMANSIIAQLLFLDAQDNTKDIYLYVNTPGGSVSAGLAIVDTMNFIKSDVQTIVMGMAASMGTIIASSGTKGKRFMLPNAEYLIHQPMGGTGSGTQQTDMAIVAEQLLKTRKRLEKILSDNSGKTIKQIHKDAERDYWMDAKETLEYGFIDAIMENNELK.

Ser96 (nucleophile) is an active-site residue. His121 is an active-site residue.

It belongs to the peptidase S14 family. In terms of assembly, fourteen ClpP subunits assemble into 2 heptameric rings which stack back to back to give a disk-like structure with a central cavity, resembling the structure of eukaryotic proteasomes.

It is found in the cytoplasm. It carries out the reaction Hydrolysis of proteins to small peptides in the presence of ATP and magnesium. alpha-casein is the usual test substrate. In the absence of ATP, only oligopeptides shorter than five residues are hydrolyzed (such as succinyl-Leu-Tyr-|-NHMec, and Leu-Tyr-Leu-|-Tyr-Trp, in which cleavage of the -Tyr-|-Leu- and -Tyr-|-Trp bonds also occurs).. Its function is as follows. Cleaves peptides in various proteins in a process that requires ATP hydrolysis. Has a chymotrypsin-like activity. Plays a major role in the degradation of misfolded proteins. This Streptococcus uberis (strain ATCC BAA-854 / 0140J) protein is ATP-dependent Clp protease proteolytic subunit.